A 240-amino-acid chain; its full sequence is Oxygen-insensitive NADPH nitroreductase (240 aa).

FMN is bound by residues 11–15 (HRSIR), S39, Q67, 128–131 (YIGG), and 167–169 (KPR).

This sequence belongs to the flavin oxidoreductase frp family. In terms of assembly, homodimer. The cofactor is FMN.

Its function is as follows. Catalyzes the reduction of nitroaromatic compounds using NADPH. Has a broad electron acceptor specificity. Reduces nitrofurazone by a ping-pong bi-bi mechanism possibly to generate a two-electron transfer product. Major oxygen-insensitive nitroreductase in E.coli. The polypeptide is Oxygen-insensitive NADPH nitroreductase (nfsA) (Escherichia coli (strain K12)).